Here is a 366-residue protein sequence, read N- to C-terminus: MSAARQAIASARSVVVKIGSSALTSLEGGLDTTRLDRLADAVEARMRAGSDVVVVSSGAIGAGLAPLGLSRRPRDLATKQAAASVGQLALAHAWGTSFARYGRTVGQVLLSADDFSRREHHRNAQRTLDRLRSLGAVAVVNENDTVATEEIRFGDNDRLAALVAHLVGADALILLSDVEGLYDGDPRKGAATFIPEVRSSADLDGVIAGSGGVLGTGGMASKLSAARLAADAGVPVLLAAAEQAATALGSGTVGTAFAARPVRLSARKFWVRHAADSRGALVLDDGAVQAVAQRRRSLLAAGITAVRGRFHGGDVVDLLAADQRLVARGVVEYDSTELSTMLGRSTTELPDTMQRPVIHADDLVKV.

Position 17 (Lys-17) interacts with ATP. 3 residues coordinate substrate: Ser-57, Asp-144, and Asn-156. ATP is bound by residues 176–177 (SD) and 216–222 (TGGMASK). The 75-residue stretch at 278–352 (RGALVLDDGA…GRSTTELPDT (75 aa)) folds into the PUA domain.

Belongs to the glutamate 5-kinase family.

The protein resides in the cytoplasm. It carries out the reaction L-glutamate + ATP = L-glutamyl 5-phosphate + ADP. It functions in the pathway amino-acid biosynthesis; L-proline biosynthesis; L-glutamate 5-semialdehyde from L-glutamate: step 1/2. In terms of biological role, catalyzes the transfer of a phosphate group to glutamate to form L-glutamate 5-phosphate. This is Glutamate 5-kinase from Nocardia farcinica (strain IFM 10152).